Here is an 87-residue protein sequence, read N- to C-terminus: Signal recognition particle 19 kDa protein (87 aa).

It belongs to the SRP19 family. As to quaternary structure, part of the signal recognition particle protein translocation system, which is composed of SRP and FtsY. Archaeal SRP consists of a 7S RNA molecule of 300 nucleotides and two protein subunits: SRP54 and SRP19.

The protein resides in the cytoplasm. Functionally, involved in targeting and insertion of nascent membrane proteins into the cytoplasmic membrane. Binds directly to 7S RNA and mediates binding of the 54 kDa subunit of the SRP. This is Signal recognition particle 19 kDa protein from Methanocaldococcus jannaschii (strain ATCC 43067 / DSM 2661 / JAL-1 / JCM 10045 / NBRC 100440) (Methanococcus jannaschii).